The following is a 90-amino-acid chain: Small ribosomal subunit protein bS20 (90 aa).

The segment at 1 to 27 is disordered; the sequence is MANSAQAKKRARQNEKRELHNASQRSA.

The protein belongs to the bacterial ribosomal protein bS20 family.

Functionally, binds directly to 16S ribosomal RNA. The protein is Small ribosomal subunit protein bS20 of Coxiella burnetii (strain CbuK_Q154) (Coxiella burnetii (strain Q154)).